We begin with the raw amino-acid sequence, 334 residues long: Serine racemase (334 aa).

Glutamate 13 contacts Mg(2+). ATP contacts are provided by serine 31, serine 32, isoleucine 33, lysine 51, and threonine 52. Residues lysine 56 and serine 84 each act as proton acceptor in the active site. Lysine 56 carries the N6-(pyridoxal phosphate)lysine modification. Pyridoxal 5'-phosphate is bound at residue asparagine 86. An ATP-binding site is contributed by glutamine 89. Cysteine 113 bears the S-nitrosocysteine mark. Tyrosine 121 contacts ATP. Asparagine 154 is a binding site for pyridoxal 5'-phosphate. Aspartate 178 serves as a coordination point for Mg(2+). Pyridoxal 5'-phosphate-binding residues include glycine 185, glycine 186, glycine 187, glycine 188, and methionine 189. Mg(2+)-binding residues include glutamate 210, alanine 214, aspartate 216, and asparagine 247. 4 residues coordinate Ca(2+): glutamate 210, alanine 214, aspartate 216, and asparagine 247. The Mn(2+) site is built by glutamate 210, alanine 214, and aspartate 216. Lysine 279 contacts ATP. Serine 313 serves as a coordination point for pyridoxal 5'-phosphate. Asparagine 316 contributes to the ATP binding site.

This sequence belongs to the serine/threonine dehydratase family. As to quaternary structure, homodimer. It depends on Mg(2+) as a cofactor. Mn(2+) serves as cofactor. The cofactor is Ca(2+). Pyridoxal 5'-phosphate is required as a cofactor. Post-translationally, S-nitrosylated, leading to decrease the enzyme activity.

It carries out the reaction L-serine = D-serine. The enzyme catalyses L-serine = pyruvate + NH4(+). The catalysed reaction is D-serine = pyruvate + NH4(+). Its function is as follows. Catalyzes the synthesis of D-serine from L-serine. D-serine is a key coagonist with glutamate at NMDA receptors. Has dehydratase activity towards both L-serine and D-serine. In Bos taurus (Bovine), this protein is Serine racemase (SRR).